Reading from the N-terminus, the 159-residue chain is Calcium-binding protein CML39 (159 aa).

4 EF-hand domains span residues 18–53, 54–89, 93–128, and 129–159; these read EKNR…LGEQ, MSDE…NDEF, EKKR…LGES, and RTTD…LMMR. Ca(2+) is bound by residues D31, N33, D35, R37, E42, D67, D69, D71, M73, and E78. Residues D142, N144, D146, and E153 each contribute to the Ca(2+) site.

In terms of tissue distribution, expressed in the zones of elongation and differentiation in seedling roots and at the root-hypocotyl junction. Expressed from stage 12 of flower development in anthers, specifically in pollen.

Functionally, potential calcium sensor that binds calcium in vitro. The sequence is that of Calcium-binding protein CML39 (CML39) from Arabidopsis thaliana (Mouse-ear cress).